The sequence spans 456 residues: Phosphomannomutase (456 aa).

Residue S98 is the Phosphoserine intermediate of the active site. S98, D245, D247, and D249 together coordinate Mg(2+).

The protein belongs to the phosphohexose mutase family. Requires Mg(2+) as cofactor.

It catalyses the reaction alpha-D-mannose 1-phosphate = D-mannose 6-phosphate. The protein operates within nucleotide-sugar biosynthesis; GDP-alpha-D-mannose biosynthesis; alpha-D-mannose 1-phosphate from D-fructose 6-phosphate: step 2/2. It functions in the pathway bacterial outer membrane biogenesis; LPS O-antigen biosynthesis. In terms of biological role, involved in GDP-mannose biosynthesis which serves as the activated sugar nucleotide precursor for mannose residues in cell surface polysaccharides. This enzyme participates in synthesis of the LPS O antigen. This Salmonella montevideo protein is Phosphomannomutase (manB).